We begin with the raw amino-acid sequence, 324 residues long: G patch domain-containing protein 4 (324 aa).

Disordered stretches follow at residues 1-30 and 123-324; these read MSASSVKKSQGMKFAEEQMHKHGWKEGKGL and LSGG…NKSE. A G-patch domain is found at 11 to 57; the sequence is GMKFAEEQMHKHGWKEGKGLGRRENGICEAIKVKVKCDHAGVGHNSA. A compositionally biased stretch (basic and acidic residues) spans 14 to 30; it reads FAEEQMHKHGWKEGKGL. Positions 131 to 141 are enriched in low complexity; the sequence is KEPSSSESSDS. Basic and acidic residues predominate over residues 186–215; the sequence is SRLEEQEREFLAKYGKKEQKNKERDEKLER. The span at 244–253 shows a compositional bias: basic residues; the sequence is HKKKKKKRKR. Residues 254–270 show a composition bias toward basic and acidic residues; sequence ADSERKEESQENGHEEE. Residues 296-309 are compositionally biased toward polar residues; it reads PSTQEEQPTESSDF. The span at 312–324 shows a compositional bias: basic residues; the sequence is KPKKKKKKKNKSE.

The sequence is that of G patch domain-containing protein 4 (gpatch4) from Xenopus laevis (African clawed frog).